We begin with the raw amino-acid sequence, 438 residues long: Transcription termination factor Rho (438 aa).

Positions 70–145 (YILFTGILEI…LKIEAINYLP (76 aa)) constitute a Rho RNA-BD domain. Residues 188–193 (GKGQRA), 200–205 (RTGKTE), and arginine 231 contribute to the ATP site.

The protein belongs to the Rho family. In terms of assembly, homohexamer. The homohexamer assembles into an open ring structure.

In terms of biological role, facilitates transcription termination by a mechanism that involves Rho binding to the nascent RNA, activation of Rho's RNA-dependent ATPase activity, and release of the mRNA from the DNA template. The protein is Transcription termination factor Rho of Helicobacter pylori (strain J99 / ATCC 700824) (Campylobacter pylori J99).